Consider the following 157-residue polypeptide: Cyclic pyranopterin monophosphate synthase (157 aa).

Substrate-binding positions include 74 to 76 and 112 to 113; these read MCH and ME. Asp-127 is an active-site residue.

The protein belongs to the MoaC family. Homohexamer; trimer of dimers.

It carries out the reaction (8S)-3',8-cyclo-7,8-dihydroguanosine 5'-triphosphate = cyclic pyranopterin phosphate + diphosphate. It participates in cofactor biosynthesis; molybdopterin biosynthesis. Functionally, catalyzes the conversion of (8S)-3',8-cyclo-7,8-dihydroguanosine 5'-triphosphate to cyclic pyranopterin monophosphate (cPMP). This chain is Cyclic pyranopterin monophosphate synthase, found in Syntrophomonas wolfei subsp. wolfei (strain DSM 2245B / Goettingen).